A 227-amino-acid chain; its full sequence is Uracil-DNA glycosylase (227 aa).

The Proton acceptor role is filled by aspartate 68.

The protein belongs to the uracil-DNA glycosylase (UDG) superfamily. UNG family.

Its subcellular location is the cytoplasm. The catalysed reaction is Hydrolyzes single-stranded DNA or mismatched double-stranded DNA and polynucleotides, releasing free uracil.. Functionally, excises uracil residues from the DNA which can arise as a result of misincorporation of dUMP residues by DNA polymerase or due to deamination of cytosine. The polypeptide is Uracil-DNA glycosylase (Mycobacterium leprae (strain Br4923)).